Here is a 436-residue protein sequence, read N- to C-terminus: 3-ketoacyl-CoA thiolase (436 aa).

The active-site Acyl-thioester intermediate is C99. Active-site proton acceptor residues include H392 and C422.

Belongs to the thiolase-like superfamily. Thiolase family. In terms of assembly, heterotetramer of two alpha chains (FadJ) and two beta chains (FadI).

It localises to the cytoplasm. It carries out the reaction an acyl-CoA + acetyl-CoA = a 3-oxoacyl-CoA + CoA. It participates in lipid metabolism; fatty acid beta-oxidation. Its function is as follows. Catalyzes the final step of fatty acid oxidation in which acetyl-CoA is released and the CoA ester of a fatty acid two carbons shorter is formed. The polypeptide is 3-ketoacyl-CoA thiolase (Aeromonas salmonicida (strain A449)).